An 83-amino-acid polypeptide reads, in one-letter code: Cell division topological specificity factor (83 aa).

Belongs to the MinE family.

Functionally, prevents the cell division inhibition by proteins MinC and MinD at internal division sites while permitting inhibition at polar sites. This ensures cell division at the proper site by restricting the formation of a division septum at the midpoint of the long axis of the cell. The polypeptide is Cell division topological specificity factor (Acidithiobacillus ferrooxidans (strain ATCC 23270 / DSM 14882 / CIP 104768 / NCIMB 8455) (Ferrobacillus ferrooxidans (strain ATCC 23270))).